A 227-amino-acid polypeptide reads, in one-letter code: Ribonuclease HII (227 aa).

Residues 16-205 form the RNase H type-2 domain; that stretch reads SLLAGVDEVG…VKMALDAVGV (190 aa). The a divalent metal cation site is built by aspartate 22, glutamate 23, and aspartate 114.

Belongs to the RNase HII family. The cofactor is Mn(2+). It depends on Mg(2+) as a cofactor.

Its subcellular location is the cytoplasm. The catalysed reaction is Endonucleolytic cleavage to 5'-phosphomonoester.. Endonuclease that specifically degrades the RNA of RNA-DNA hybrids. In Marinobacter nauticus (strain ATCC 700491 / DSM 11845 / VT8) (Marinobacter aquaeolei), this protein is Ribonuclease HII.